The primary structure comprises 139 residues: Maintenance of telomere capping protein 7 (139 aa).

The next 2 membrane-spanning stretches (helical) occupy residues Ser13–Leu33 and Phe42–Ile62. The tract at residues Arg94 to Glu121 is disordered. Residues Gln104–Thr114 are compositionally biased toward basic residues.

Its subcellular location is the membrane. May be involved in telomere capping. This is Maintenance of telomere capping protein 7 (MTC7) from Saccharomyces cerevisiae (strain ATCC 204508 / S288c) (Baker's yeast).